The primary structure comprises 801 residues: Probable phosphoketolase (801 aa).

This sequence belongs to the XFP family. Requires thiamine diphosphate as cofactor.

In Bradyrhizobium diazoefficiens (strain JCM 10833 / BCRC 13528 / IAM 13628 / NBRC 14792 / USDA 110), this protein is Probable phosphoketolase.